Here is a 171-residue protein sequence, read N- to C-terminus: Tubulin polymerization-promoting protein family member 2 (171 aa).

The disordered stretch occupies residues 120 to 171 (LTDTSKYTGTHKERFDESGKGKGIAGREDVTDNSGYVSGYKGAGTYDKKGSN). Positions 129–149 (THKERFDESGKGKGIAGREDV) are enriched in basic and acidic residues.

This sequence belongs to the TPPP family.

The protein localises to the cytoplasm. It localises to the cytosol. Its subcellular location is the cell projection. The protein resides in the cilium. It is found in the flagellum. In terms of biological role, probable regulator of microtubule dynamics required for sperm motility. In contrast to other members of the family, has no microtubule bundling activity. The sequence is that of Tubulin polymerization-promoting protein family member 2 from Bos taurus (Bovine).